We begin with the raw amino-acid sequence, 125 residues long: Basic leucine zipper transcriptional factor ATF-like (125 aa).

The span at 1 to 14 (MPHSSDSSDSSFSR) shows a compositional bias: low complexity. Positions 1–58 (MPHSSDSSDSSFSRSPPPGKQDSSDDVRRVQRREKNRIAAQKSRQRQTQKADTLHLES) are disordered. Positions 26-89 (DVRRVQRREK…KYFTSVLNSH (64 aa)) constitute a bZIP domain. Positions 28–50 (RRVQRREKNRIAAQKSRQRQTQK) are basic motif. Residue serine 43 is modified to Phosphoserine. Threonine 48 carries the phosphothreonine modification. A leucine-zipper region spans residues 54 to 75 (LHLESEDLEKQNAALRKEIKQL).

The protein belongs to the bZIP family. As to quaternary structure, heterodimer; mainly heterodimerizes with JUNB. The BATF-JUNB heterodimer interacts with IRF4 and IRF8. Interacts (via bZIP domain) with IRF4 and IRF8; the interaction is direct. Also forms heterodimers with JUN and JUND. Also interacts with IFI35. Post-translationally, phosphorylated on serine and threonine residues and at least one tyrosine residue. Phosphorylation at Ser-43 inhibit DNA binding activity and transforms it as a negative regulator of AP-1 mediated transcription. Phosphorylated. Expressed at highest levels in lung, and at lower levels in placenta, liver, kidney, spleen, and peripheral blood. Detected in SW480 colorectal cancer cell line and several hematopoietic tumor cell lines, including Raji Burkitt's lymphoma. Strongly expressed in mature B- and T-lymphocytes. Also expressed in moderate levels in lymph node and appendix and at low levels in thymus and bone marrow.

The protein localises to the nucleus. It is found in the cytoplasm. In terms of biological role, AP-1 family transcription factor that controls the differentiation of lineage-specific cells in the immune system: specifically mediates the differentiation of T-helper 17 cells (Th17), follicular T-helper cells (TfH), CD8(+) dendritic cells and class-switch recombination (CSR) in B-cells. Acts via the formation of a heterodimer with JUNB that recognizes and binds DNA sequence 5'-TGA[CG]TCA-3'. The BATF-JUNB heterodimer also forms a complex with IRF4 (or IRF8) in immune cells, leading to recognition of AICE sequence (5'-TGAnTCA/GAAA-3'), an immune-specific regulatory element, followed by cooperative binding of BATF and IRF4 (or IRF8) and activation of genes. Controls differentiation of T-helper cells producing interleukin-17 (Th17 cells) by binding to Th17-associated gene promoters: regulates expression of the transcription factor RORC itself and RORC target genes such as IL17 (IL17A or IL17B). Also involved in differentiation of follicular T-helper cells (TfH) by directing expression of BCL6 and MAF. In B-cells, involved in class-switch recombination (CSR) by controlling the expression of both AICDA and of germline transcripts of the intervening heavy-chain region and constant heavy-chain region (I(H)-C(H)). Following infection, can participate in CD8(+) dendritic cell differentiation via interaction with IRF4 and IRF8 to mediate cooperative gene activation. Regulates effector CD8(+) T-cell differentiation by regulating expression of SIRT1. Following DNA damage, part of a differentiation checkpoint that limits self-renewal of hematopoietic stem cells (HSCs): up-regulated by STAT3, leading to differentiation of HSCs, thereby restricting self-renewal of HSCs. The chain is Basic leucine zipper transcriptional factor ATF-like (BATF) from Homo sapiens (Human).